The sequence spans 228 residues: Claudin-10 (228 aa).

The helical transmembrane segment at 1–21 (MASTASEIIAFMVSISGWVLV) threads the bilayer. Over 22-80 (SSTLPTDYWKVSTIDGTVITTATYWANLWKACVTDSTGVSNCKDFPSMLALDGYIQACR) the chain is Extracellular. Residues 81–101 (GLMIAAVSLGFFGSIFALFGM) traverse the membrane as a helical segment. The Cytoplasmic segment spans residues 102 to 115 (KCTKVGGSDKAKAK). A helical membrane pass occupies residues 116–136 (IACLAGIVFILSGLCSMTGCS). Residues 137–160 (LYANKITTEFFDPLFVEQKYELGA) are Extracellular-facing. Residues 161–181 (ALFIGWAGASLCIIGGVIFCF) traverse the membrane as a helical segment. Over 182–228 (SISDNNKTPRYAYNGATSVMSSRTKYHGGEDFKTTNPSKQFDKNAYV) the chain is Cytoplasmic.

This sequence belongs to the claudin family. As to quaternary structure, can form homodimers both in trans (interaction between CLDN10 molecules in opposing membranes) and in cis (interaction between CLDN10 molecules within one membrane). Interacts with CLDN19.

Its subcellular location is the cell junction. The protein resides in the tight junction. The protein localises to the cell membrane. It carries out the reaction Na(+)(in) = Na(+)(out). The enzyme catalyses Li(+)(in) = Li(+)(out). The catalysed reaction is K(+)(in) = K(+)(out). It catalyses the reaction Rb(+)(in) = Rb(+)(out). It carries out the reaction Cs(+)(in) = Cs(+)(out). The enzyme catalyses NH4(+)(in) = NH4(+)(out). The catalysed reaction is methylamine(out) = methylamine(in). It catalyses the reaction Mg(2+)(in) = Mg(2+)(out). It carries out the reaction Ca(2+)(in) = Ca(2+)(out). The enzyme catalyses Sr(2+)(in) = Sr(2+)(out). The catalysed reaction is chloride(in) = chloride(out). It catalyses the reaction nitrate(in) = nitrate(out). Functionally, forms paracellular channels: polymerizes in tight junction strands with cation- and anion-selective channels through the strands, conveying epithelial permeability in a process known as paracellular tight junction permeability. In sweat glands and in the thick ascending limb (TAL) of Henle's loop in kidney, it controls paracellular sodium permeability which is essential for proper sweat production and renal function. In renal proximal tubules, it conveys selective chloride over hydrogencarbonate anion permeability which is required for renal chloride reabsorption and salt homeostasis. In Pongo abelii (Sumatran orangutan), this protein is Claudin-10 (CLDN10).